The following is a 543-amino-acid chain: CTP synthase (543 aa).

Residues Met1–Ile265 are amidoligase domain. Ser13 contacts CTP. Residue Ser13 coordinates UTP. Ser14–Leu19 is a binding site for ATP. Tyr54 contributes to the L-glutamine binding site. Residue Asp71 participates in ATP binding. Residues Asp71 and Glu139 each coordinate Mg(2+). Residues Asp146–Glu148, Lys186–Gln191, and Lys222 contribute to the CTP site. Residues Lys186–Gln191 and Lys222 each bind UTP. Arg238–Ala240 contacts ATP. In terms of domain architecture, Glutamine amidotransferase type-1 spans Thr291–Leu542. Gly353 contacts L-glutamine. Cys380 functions as the Nucleophile; for glutamine hydrolysis in the catalytic mechanism. L-glutamine contacts are provided by residues Phe381–Gln384, Glu404, and Arg470. Active-site residues include His515 and Glu517.

This sequence belongs to the CTP synthase family. In terms of assembly, homotetramer.

The catalysed reaction is UTP + L-glutamine + ATP + H2O = CTP + L-glutamate + ADP + phosphate + 2 H(+). It carries out the reaction L-glutamine + H2O = L-glutamate + NH4(+). The enzyme catalyses UTP + NH4(+) + ATP = CTP + ADP + phosphate + 2 H(+). It functions in the pathway pyrimidine metabolism; CTP biosynthesis via de novo pathway; CTP from UDP: step 2/2. Its activity is regulated as follows. Allosterically activated by GTP, when glutamine is the substrate; GTP has no effect on the reaction when ammonia is the substrate. The allosteric effector GTP functions by stabilizing the protein conformation that binds the tetrahedral intermediate(s) formed during glutamine hydrolysis. Inhibited by the product CTP, via allosteric rather than competitive inhibition. Catalyzes the ATP-dependent amination of UTP to CTP with either L-glutamine or ammonia as the source of nitrogen. Regulates intracellular CTP levels through interactions with the four ribonucleotide triphosphates. The chain is CTP synthase from Rhodopseudomonas palustris (strain HaA2).